Reading from the N-terminus, the 696-residue chain is Polyribonucleotide nucleotidyltransferase (696 aa).

Residues aspartate 483 and aspartate 489 each coordinate Mg(2+). Positions 550–609 constitute a KH domain; sequence PRITTIYVKTDKIRDVIGSGGKNIRGITEATGVTIDIDDTGKINIASTDKAACDLAIKMI. One can recognise an S1 motif domain in the interval 619-687; that stretch reads GKLYMGLVKK…KQGKIKLSRK (69 aa).

It belongs to the polyribonucleotide nucleotidyltransferase family. Requires Mg(2+) as cofactor.

The protein localises to the cytoplasm. The enzyme catalyses RNA(n+1) + phosphate = RNA(n) + a ribonucleoside 5'-diphosphate. Involved in mRNA degradation. Catalyzes the phosphorolysis of single-stranded polyribonucleotides processively in the 3'- to 5'-direction. The sequence is that of Polyribonucleotide nucleotidyltransferase from Geotalea uraniireducens (strain Rf4) (Geobacter uraniireducens).